The sequence spans 124 residues: Mini zinc finger protein 4 (124 aa).

The ZF-HD dimerization-type; degenerate zinc finger occupies 35 to 84 (YGECRRNHAARMGGHAVDGCREFLAEGEEGTGGALRCAACGCHRSFHRRV).

As to quaternary structure, homo- and heterodimers.

It localises to the cytoplasm. In terms of biological role, inhibits zinc finger homeodomain (ZHD) transcription factors, by interacting with them to prevent both their nuclear localization and their DNA-binding properties. This Oryza sativa subsp. japonica (Rice) protein is Mini zinc finger protein 4 (MIF4).